The chain runs to 259 residues: HTH-type quorum sensing-dependent transcriptional regulator VjbR (259 aa).

Positions 76–179 (KNYFAIDPVF…AGIIHGTVCG (104 aa)) are C12-HSL binding. Positions 183 to 248 (ANSVASLLTP…SAVATALSLG (66 aa)) constitute an HTH luxR-type domain. A DNA-binding region (H-T-H motif) is located at residues 207–226 (DGEIAEILSIARWTVVTYLQ).

Functionally, transcriptional regulator involved in the global control of Brucella gene expression. Mediates the effects of the quorum sensing autoinducer C12-HSL (N-dodecanoyl-homoserine lactone) on a large and diverse number of genes. In Brucella ovis (strain ATCC 25840 / 63/290 / NCTC 10512), this protein is HTH-type quorum sensing-dependent transcriptional regulator VjbR (vjbR).